The chain runs to 143 residues: Small ribosomal subunit protein bS18 (143 aa).

Residues Met-1–Gly-72 are disordered. Over residues Lys-10–Arg-50 the composition is skewed to gly residues. Positions Gly-51–Arg-70 are enriched in basic and acidic residues.

Belongs to the bacterial ribosomal protein bS18 family. In terms of assembly, part of the 30S ribosomal subunit. Forms a tight heterodimer with protein bS6.

Its function is as follows. Binds as a heterodimer with protein bS6 to the central domain of the 16S rRNA, where it helps stabilize the platform of the 30S subunit. The sequence is that of Small ribosomal subunit protein bS18 from Anaeromyxobacter sp. (strain Fw109-5).